Reading from the N-terminus, the 499-residue chain is Maturase K (499 aa).

This sequence belongs to the intron maturase 2 family. MatK subfamily.

Its subcellular location is the plastid. It localises to the chloroplast. Usually encoded in the trnK tRNA gene intron. Probably assists in splicing its own and other chloroplast group II introns. The sequence is that of Maturase K from Gymnocladus dioicus (Kentucky coffee tree).